A 660-amino-acid chain; its full sequence is UvrABC system protein B (660 aa).

Residues 25–183 (EGLNKGLKHQ…ALINIHYERN (159 aa)) form the Helicase ATP-binding domain. Residue 38–45 (GVTGSGKT) coordinates ATP. A Beta-hairpin motif is present at residues 91-114 (YYDYYQPEAYLPTTDTYIEKDSSV). One can recognise a Helicase C-terminal domain in the interval 431-593 (QIDDLIGEVN…IVPQTIHKAL (163 aa)). The UVR domain maps to 622 to 657 (ADMVIELEAEMHLAAKNLEFERAAALRDNIKELRST).

Belongs to the UvrB family. As to quaternary structure, forms a heterotetramer with UvrA during the search for lesions. Interacts with UvrC in an incision complex.

It localises to the cytoplasm. In terms of biological role, the UvrABC repair system catalyzes the recognition and processing of DNA lesions. A damage recognition complex composed of 2 UvrA and 2 UvrB subunits scans DNA for abnormalities. Upon binding of the UvrA(2)B(2) complex to a putative damaged site, the DNA wraps around one UvrB monomer. DNA wrap is dependent on ATP binding by UvrB and probably causes local melting of the DNA helix, facilitating insertion of UvrB beta-hairpin between the DNA strands. Then UvrB probes one DNA strand for the presence of a lesion. If a lesion is found the UvrA subunits dissociate and the UvrB-DNA preincision complex is formed. This complex is subsequently bound by UvrC and the second UvrB is released. If no lesion is found, the DNA wraps around the other UvrB subunit that will check the other stand for damage. This chain is UvrABC system protein B, found in Methanococcoides burtonii (strain DSM 6242 / NBRC 107633 / OCM 468 / ACE-M).